A 285-amino-acid chain; its full sequence is Acetyl-coenzyme A carboxylase carboxyl transferase subunit beta (285 aa).

The region spanning 29-285 is the CoA carboxyltransferase N-terminal domain; it reads IMTKCPKCKK…ILKIHQEVTK (257 aa). The Zn(2+) site is built by C33, C36, C52, and C55. A C4-type zinc finger spans residues 33-55; it reads CPKCKKIMYTKELAENLNVCFNC.

The protein belongs to the AccD/PCCB family. As to quaternary structure, acetyl-CoA carboxylase is a heterohexamer composed of biotin carboxyl carrier protein (AccB), biotin carboxylase (AccC) and two subunits each of ACCase subunit alpha (AccA) and ACCase subunit beta (AccD). Requires Zn(2+) as cofactor.

Its subcellular location is the cytoplasm. It carries out the reaction N(6)-carboxybiotinyl-L-lysyl-[protein] + acetyl-CoA = N(6)-biotinyl-L-lysyl-[protein] + malonyl-CoA. Its pathway is lipid metabolism; malonyl-CoA biosynthesis; malonyl-CoA from acetyl-CoA: step 1/1. Component of the acetyl coenzyme A carboxylase (ACC) complex. Biotin carboxylase (BC) catalyzes the carboxylation of biotin on its carrier protein (BCCP) and then the CO(2) group is transferred by the transcarboxylase to acetyl-CoA to form malonyl-CoA. The polypeptide is Acetyl-coenzyme A carboxylase carboxyl transferase subunit beta (Staphylococcus aureus (strain MSSA476)).